The following is a 925-amino-acid chain: ETO1-like protein 2 (925 aa).

One can recognise a BTB domain in the interval 207 to 307 (SDISFCVGSE…ECEARLAASV (101 aa)). A TPR 1 repeat occupies 409-442 (ALSLHQMGCVLFERKDYKAAQFHFRLASSLGHVY). Residues 509 to 533 (KYRAVMKFEQKQIKEAFQEIDRLIQ) adopt a coiled-coil conformation. TPR repeat units follow at residues 538 to 571 (PECLELRAWLYLATGDRESCLRDLRAVLSLEPNY), 664 to 697 (AERLVYEGWLLYDMGYVEETLTKAEEAISIQRSF), 738 to 771 (GQALNNLGSIYINLGMLDQAETAYKNAIEIKHIR), 773 to 803 (RQGLARVYFLKNQRKEACEEMTKLIEKSCSK), 834 to 867 (TYPYRYRAAVLMDDQRETEAVEELSKAIAFRPEL), and 869 to 900 (TLHLRAAFHEATGNLSLATQDCEAALCLDPNH).

It belongs to the ETO1 family. Interacts with the C-terminal domain of ACS5. As to expression, constitutively expressed in green and etiolated seedlings.

Its pathway is protein modification; protein ubiquitination. Its function is as follows. Potential regulator of the ethylene pathway, which acts by regulating the stability of 1-aminocyclopropane-1-carboxylate synthase (ACS) enzymes. May act as a substrate-specific adapter that connects ACS enzymes, such as ACS5, to ubiquitin ligase complexes, leading to proteasomal degradation of ACS enzymes. The sequence is that of ETO1-like protein 2 (EOL2) from Arabidopsis thaliana (Mouse-ear cress).